Consider the following 338-residue polypeptide: Ketol-acid reductoisomerase (NADP(+)) (338 aa).

Residues 1-181 (MNVFYDKDAD…GGGRAGIIET (181 aa)) enclose the KARI N-terminal Rossmann domain. Residues 24 to 27 (YGSQ), arginine 47, and serine 52 each bind NADP(+). The active site involves histidine 107. Glycine 133 lines the NADP(+) pocket. The KARI C-terminal knotted domain occupies 182-327 (NFREETETDL…AKLRAMMPWI (146 aa)). Aspartate 190, glutamate 194, glutamate 226, and glutamate 230 together coordinate Mg(2+). Residue serine 251 coordinates substrate.

It belongs to the ketol-acid reductoisomerase family. Requires Mg(2+) as cofactor.

The catalysed reaction is (2R)-2,3-dihydroxy-3-methylbutanoate + NADP(+) = (2S)-2-acetolactate + NADPH + H(+). It carries out the reaction (2R,3R)-2,3-dihydroxy-3-methylpentanoate + NADP(+) = (S)-2-ethyl-2-hydroxy-3-oxobutanoate + NADPH + H(+). Its pathway is amino-acid biosynthesis; L-isoleucine biosynthesis; L-isoleucine from 2-oxobutanoate: step 2/4. The protein operates within amino-acid biosynthesis; L-valine biosynthesis; L-valine from pyruvate: step 2/4. Its function is as follows. Involved in the biosynthesis of branched-chain amino acids (BCAA). Catalyzes an alkyl-migration followed by a ketol-acid reduction of (S)-2-acetolactate (S2AL) to yield (R)-2,3-dihydroxy-isovalerate. In the isomerase reaction, S2AL is rearranged via a Mg-dependent methyl migration to produce 3-hydroxy-3-methyl-2-ketobutyrate (HMKB). In the reductase reaction, this 2-ketoacid undergoes a metal-dependent reduction by NADPH to yield (R)-2,3-dihydroxy-isovalerate. This is Ketol-acid reductoisomerase (NADP(+)) from Burkholderia multivorans (strain ATCC 17616 / 249).